Consider the following 170-residue polypeptide: RNA pyrophosphohydrolase (170 aa).

Positions 9-162 (PYRPCAGIMV…KRAVYEKVVA (154 aa)) constitute a Nudix hydrolase domain. A Nudix box motif is present at residues 50–71 (GGIDDGERPLTAAIRELYEETG).

It belongs to the Nudix hydrolase family. RppH subfamily. A divalent metal cation serves as cofactor.

Its function is as follows. Accelerates the degradation of transcripts by removing pyrophosphate from the 5'-end of triphosphorylated RNA, leading to a more labile monophosphorylated state that can stimulate subsequent ribonuclease cleavage. The polypeptide is RNA pyrophosphohydrolase (Agrobacterium fabrum (strain C58 / ATCC 33970) (Agrobacterium tumefaciens (strain C58))).